A 365-amino-acid polypeptide reads, in one-letter code: Quinolone epoxide rearrangement protein asqO (365 aa).

This sequence belongs to the quinolone epoxide rearrangement protein penF family.

It carries out the reaction (1'E,3'E)-5-(3,3-dimethyloxiran-2-yl)-3-methylhexa-1,3-dienyl-quinolinone B = aspoquinolone A. The catalysed reaction is (1'E,3'E)-5-(3,3-dimethyloxiran-2-yl)-3-methylhexa-1,3-dienyl-quinolinone B = aspoquinolone B. It participates in secondary metabolite biosynthesis. It functions in the pathway alkaloid biosynthesis. The protein operates within mycotoxin biosynthesis. In terms of biological role, quinolone epoxide rearrangement protein; part of the gene cluster that mediates the biosynthesis of the aspoquinolone mycotoxins. Within the pathway, asqO catalyzes an enzymatic 3-exo-tet cyclization to yield the cyclopropyl-THF ring system in aspoquinolone. The first step of the pathway is catalyzed by the nonribosomal peptide synthetase asqK that condenses anthranilic acid and O-methyl-L-tyrosine to produce 4'-methoxycyclopeptin. 4'-methoxycyclopeptin is then converted to 4'-methoxydehydrocyclopeptin by the ketoglutarate-dependent dioxygenase asqJ. AsqJ also converts its first product 4'-methoxydehydrocyclopeptin to 4'-methoxycyclopenin. The following conversion of 4'-methoxycyclopenin into 4'-methoxyviridicatin is catalyzed by the cyclopenase asqI. 4'-methoxyviridicatin is the precursor of quinolone natural products, and is further converted to quinolinone B. The prenyltransferase asqH1 then catalyzes the canonical Friedel-Crafts alkylation of quinolinone B with dimethylallyl cation to yield dimethylallyl quinolone, which is subjected to FAD-dependent dehydrogenation by the FAD-linked oxidoreductase asqF to yield conjugated aryl diene. The delta(3') double bond then serves as the site of the second alkylation with DMAPP catalyzed by the prenyltransferase asqH2 to yield a carbenium ion intermediate, which can be attacked by H(2)O to yield a styrenyl quinolone containing a C3'-hydroxyprenyl chain. The FAD-dependent monooxygenase asqG performs epoxidation of the terminal C7'-C8' olefin. Finally, after dehydratation of the epoxide at C3 by asqC, the quinolone epoxide rearrangement protein asqO catalyzes an enzymatic 3-exo-tet cyclization to yield the cyclopropyl-THF ring system in aspoquinolone. The protein is Quinolone epoxide rearrangement protein asqO of Emericella nidulans (strain FGSC A4 / ATCC 38163 / CBS 112.46 / NRRL 194 / M139) (Aspergillus nidulans).